A 119-amino-acid chain; its full sequence is Large ribosomal subunit protein bL19 (119 aa).

Belongs to the bacterial ribosomal protein bL19 family.

This protein is located at the 30S-50S ribosomal subunit interface and may play a role in the structure and function of the aminoacyl-tRNA binding site. This is Large ribosomal subunit protein bL19 from Photobacterium profundum (strain SS9).